Consider the following 102-residue polypeptide: NADH-quinone oxidoreductase subunit K (102 aa).

The next 3 membrane-spanning stretches (helical) occupy residues 5–25 (LSHYLTVSAILFTLGVFGIFL), 31–51 (IVILMSIELILLAVNINMVAF), and 65–85 (LFILTVAAAEAAIGLAILVVF).

It belongs to the complex I subunit 4L family. In terms of assembly, NDH-1 is composed of 14 different subunits. Subunits NuoA, H, J, K, L, M, N constitute the membrane sector of the complex.

The protein localises to the cell inner membrane. The enzyme catalyses a quinone + NADH + 5 H(+)(in) = a quinol + NAD(+) + 4 H(+)(out). Its function is as follows. NDH-1 shuttles electrons from NADH, via FMN and iron-sulfur (Fe-S) centers, to quinones in the respiratory chain. The immediate electron acceptor for the enzyme in this species is believed to be ubiquinone. Couples the redox reaction to proton translocation (for every two electrons transferred, four hydrogen ions are translocated across the cytoplasmic membrane), and thus conserves the redox energy in a proton gradient. The sequence is that of NADH-quinone oxidoreductase subunit K from Rhizobium johnstonii (strain DSM 114642 / LMG 32736 / 3841) (Rhizobium leguminosarum bv. viciae).